The following is a 319-amino-acid chain: Guanosine ABC transporter permease protein NupQ (319 aa).

9 helical membrane-spanning segments follow: residues 6-26, 39-59, 65-85, 99-119, 159-179, 204-224, 235-255, 257-277, and 282-302; these read ILSI…LTAL, IGLE…NLFF, AAAP…FSLI, VSGV…VKLI, ILAI…PFGL, IGVM…ASTI, GQGF…IGAL, AALF…LPLF, and NVYM…GFIG.

It belongs to the binding-protein-dependent transport system permease family. As to quaternary structure, the complex is composed of two ATP-binding proteins (NupO), two transmembrane proteins (NupP and NupQ) and a solute-binding protein (NupN).

The protein localises to the cell membrane. Part of an ABC transporter complex involved in the uptake of guanosine. Responsible for the translocation of the substrate across the membrane. May be a nucleoside transporter of broad specificity but with various affinities for different substrates. This Bacillus subtilis (strain 168) protein is Guanosine ABC transporter permease protein NupQ.